The primary structure comprises 79 residues: Small ribosomal subunit protein uS17 (79 aa).

The protein belongs to the universal ribosomal protein uS17 family. Part of the 30S ribosomal subunit.

One of the primary rRNA binding proteins, it binds specifically to the 5'-end of 16S ribosomal RNA. In Rhizobium etli (strain ATCC 51251 / DSM 11541 / JCM 21823 / NBRC 15573 / CFN 42), this protein is Small ribosomal subunit protein uS17.